A 493-amino-acid chain; its full sequence is Maintenance of mitochondrial morphology protein 1 (493 aa).

Topologically, residues Met-1–Gly-23 are lumenal. A helical transmembrane segment spans residues Phe-24–Phe-44. At Gly-45–Pro-493 the chain is on the cytoplasmic side. The disordered stretch occupies residues Ser-52–Ser-104. Positions Asn-69 to Asn-81 are enriched in low complexity. Residues Ser-93–Ser-104 are compositionally biased toward polar residues. The region spanning Gln-140–Pro-391 is the SMP-LTD domain. Positions Ser-420–Pro-493 are disordered.

This sequence belongs to the MMM1 family. Homodimer. Component of the ER-mitochondria encounter structure (ERMES) or MDM complex, composed of mmm1, mdm10, mdm12 and mdm34. A mmm1 homodimer associates with one molecule of mdm12 on each side in a pairwise head-to-tail manner, and the SMP-LTD domains of mmm1 and mdm12 generate a continuous hydrophobic tunnel for phospholipid trafficking.

It is found in the endoplasmic reticulum membrane. Functionally, component of the ERMES/MDM complex, which serves as a molecular tether to connect the endoplasmic reticulum (ER) and mitochondria. Components of this complex are involved in the control of mitochondrial shape and protein biogenesis, and function in nonvesicular lipid trafficking between the ER and mitochondria. The mdm12-mmm1 subcomplex functions in the major beta-barrel assembly pathway that is responsible for biogenesis of all outer membrane beta-barrel proteins, and acts in a late step after the SAM complex. The mdm10-mdm12-mmm1 subcomplex further acts in the TOM40-specific pathway after the action of the mdm12-mmm1 complex. Essential for establishing and maintaining the structure of mitochondria and maintenance of mtDNA nucleoids. In Talaromyces stipitatus (strain ATCC 10500 / CBS 375.48 / QM 6759 / NRRL 1006) (Penicillium stipitatum), this protein is Maintenance of mitochondrial morphology protein 1.